A 683-amino-acid polypeptide reads, in one-letter code: Zinc finger protein 510 (683 aa).

The KRAB domain maps to 46 to 117; that stretch reads VSFKDVTIEF…EEEFSNQSHP (72 aa). The C2H2-type 1; degenerate zinc-finger motif lies at 254–276; sequence FECNKIGKAFNDKANCVKHNSSH. 9 C2H2-type zinc fingers span residues 404-426, 432-454, 460-482, 488-510, 516-538, 544-566, 572-594, 600-622, and 628-650; these read YKCNECGKSFCQKGHLIQHQRTH, FECSECGKTFSQKSHLSTHQRIH, YKCNECGKTFVQKSTLRGHQRIH, YECSECGKTFVQKSTLRDHHRIH, FQCNQCGKTFGQKSNLRIHQRTH, YQCNECEKSFWRKDHLIQHQKTH, FKCNECGKTFARTSTLRVHQRIH, FKCNECGKKFVRKAILSDHQRIH, and FQCNKCGKTFGQKSNLRIHQRTH.

The protein belongs to the krueppel C2H2-type zinc-finger protein family.

The protein resides in the nucleus. In terms of biological role, may be involved in transcriptional regulation. This is Zinc finger protein 510 (ZNF510) from Homo sapiens (Human).